The sequence spans 429 residues: Enolase (429 aa).

(2R)-2-phosphoglycerate is bound at residue Gln-163. The active-site Proton donor is Glu-205. Residues Asp-242, Glu-286, and Asp-313 each coordinate Mg(2+). Positions 338, 367, 368, and 389 each coordinate (2R)-2-phosphoglycerate. Residue Lys-338 is the Proton acceptor of the active site.

The protein belongs to the enolase family. Requires Mg(2+) as cofactor.

The protein resides in the cytoplasm. The protein localises to the secreted. It is found in the cell surface. It carries out the reaction (2R)-2-phosphoglycerate = phosphoenolpyruvate + H2O. The protein operates within carbohydrate degradation; glycolysis; pyruvate from D-glyceraldehyde 3-phosphate: step 4/5. In terms of biological role, catalyzes the reversible conversion of 2-phosphoglycerate (2-PG) into phosphoenolpyruvate (PEP). It is essential for the degradation of carbohydrates via glycolysis. The chain is Enolase from Geobacter metallireducens (strain ATCC 53774 / DSM 7210 / GS-15).